A 147-amino-acid polypeptide reads, in one-letter code: Hemoglobin subunit beta (147 aa).

Residues 2–147 (DWTDAERAAI…VVSALGRQYH (146 aa)) form the Globin domain. H63 and H92 together coordinate heme b.

This sequence belongs to the globin family. As to quaternary structure, heterotetramer of two alpha chains and two beta chains. Red blood cells.

Involved in oxygen transport from gills to the various peripheral tissues. This Leiostomus xanthurus (Spot) protein is Hemoglobin subunit beta (hbb).